The sequence spans 292 residues: NAD kinase (292 aa).

The Proton acceptor role is filled by D73. NAD(+)-binding positions include 73-74 (DG), 147-148 (NE), H158, R175, D177, 188-193 (TAYSLS), and Q247.

It belongs to the NAD kinase family. Requires a divalent metal cation as cofactor.

It localises to the cytoplasm. The enzyme catalyses NAD(+) + ATP = ADP + NADP(+) + H(+). Functionally, involved in the regulation of the intracellular balance of NAD and NADP, and is a key enzyme in the biosynthesis of NADP. Catalyzes specifically the phosphorylation on 2'-hydroxyl of the adenosine moiety of NAD to yield NADP. The chain is NAD kinase from Salmonella agona (strain SL483).